Reading from the N-terminus, the 416-residue chain is Serine hydroxymethyltransferase (416 aa).

Residues leucine 121 and 125–127 contribute to the (6S)-5,6,7,8-tetrahydrofolate site; that span reads GHL. An N6-(pyridoxal phosphate)lysine modification is found at lysine 229.

This sequence belongs to the SHMT family. Homodimer. Pyridoxal 5'-phosphate is required as a cofactor.

The protein resides in the cytoplasm. The catalysed reaction is (6R)-5,10-methylene-5,6,7,8-tetrahydrofolate + glycine + H2O = (6S)-5,6,7,8-tetrahydrofolate + L-serine. It functions in the pathway one-carbon metabolism; tetrahydrofolate interconversion. It participates in amino-acid biosynthesis; glycine biosynthesis; glycine from L-serine: step 1/1. Its function is as follows. Catalyzes the reversible interconversion of serine and glycine with tetrahydrofolate (THF) serving as the one-carbon carrier. This reaction serves as the major source of one-carbon groups required for the biosynthesis of purines, thymidylate, methionine, and other important biomolecules. Also exhibits THF-independent aldolase activity toward beta-hydroxyamino acids, producing glycine and aldehydes, via a retro-aldol mechanism. In Bordetella avium (strain 197N), this protein is Serine hydroxymethyltransferase.